Here is a 479-residue protein sequence, read N- to C-terminus: Transcription factor CP2-like protein 1 (479 aa).

The tract at residues 1–52 (MLFWHTQPEHYNQHNSGSYLRDVLALPIFKQEEPQLSPENGARLPPLQYVLC) is mediate transcriptional repression. One can recognise a Grh/CP2 DB domain in the interval 43–280 (RLPPLQYVLC…PSPSYNGSPN (238 aa)). Disordered regions lie at residues 219–248 (KPKG…YQPS) and 260–301 (WPDV…LPLG). The segment covering 221–245 (KGADRKQKTDREKMEKRTAQEKEKY) has biased composition (basic and acidic residues). The segment at 261 to 365 (PDVPYQANNT…IRLFNAIKGR (105 aa)) is SAM2-like domain. Residues 266–292 (QANNTPSPSYNGSPNSFGLREGNSSPN) are compositionally biased toward polar residues.

The protein belongs to the grh/CP2 family. CP2 subfamily. In terms of assembly, forms homohexamers via its SAM-like domain. Interacts with Mta1; which is indispensable for Tfcp2l1-mediated self-renewal-promoting effect and endoderm-inhibiting action. Highly expressed in placenta, testis, small intestine, kidney and stomach. Low levels of expression in lung, mesenteric lymph nodes, muscle, ovary, and thymus. No expression was detected in brain, heart, liver, and spleen. Expressed in eccrine glands in the palm. Expression is prominent in both kidney collecting ducts intercalated (IC) and principal (PC) cells. Also expressed in the thick limb of Henle and connecting segments of the nephron.

The protein localises to the nucleus. Its function is as follows. Transcription factor that facilitates establishment and maintenance of pluripotency in embryonic stem cells (ESCs). With Klf2, acts as the major effector of self-renewal that mediates induction of pluripotency downstream of LIF/Stat3 and Wnt/beta-catenin signaling. Required for normal duct development in the salivary gland and kidney. Coordinates the development of the kidney collecting ducts intercalated (IC) and principal (PC) cells, which regulate acid-base and salt-water homeostasis, respectively. Regulates the expression of IC genes including subunits B1 and D2 of the V-ATPase complex, Oxgr1, Ca12, Slc4a1, Aqp6 and IC-specific transcription factor Foxi1. Also regulates the expression of Jag1 and subsequent notch signaling in the collecting duct. Jag1 initiates notch signaling in PCs but inhibits notch signaling in ICs. Acts as a transcriptional suppressor that may suppress UBP1-mediated transcriptional activation. Modulates the placental expression of CYP11A1. This Mus musculus (Mouse) protein is Transcription factor CP2-like protein 1 (Tfcp2l1).